We begin with the raw amino-acid sequence, 154 residues long: TSET complex member tstD (154 aa).

Belongs to the adaptor complexes small subunit family. In terms of assembly, component of the TSET complex, a heterohexamer composed of tstA, tstB, tstC, tstD, tstE and tstF, which may act in plasma membrane turnover. tstA, tstB, tstC and tstD are likely to be the core complex members with tstE and tstF acting as associated scaffold proteins.

The protein localises to the cell membrane. It localises to the cytoplasm. In Dictyostelium discoideum (Social amoeba), this protein is TSET complex member tstD.